Here is a 465-residue protein sequence, read N- to C-terminus: COP9 signalosome complex subunit 5 (465 aa).

The region spanning 74–216 (VLLSKLACSK…IGSFRTYQDQ (143 aa)) is the MPN domain. Residues His162, His164, and Asp175 each coordinate Zn(2+). The JAMM motif signature appears at 162–175 (HSHPGYDCWLSNID). The interval 364–386 (SSIHTQMNNQNNQQERNSPKRPH) is disordered.

Belongs to the peptidase M67A family. CSN5 subfamily. As to quaternary structure, component of the COP9 signalosome (CSN) complex.

It is found in the cytoplasm. Its subcellular location is the nucleus. Catalytic Component of the COP9 signalosome (CSN) complex that acts as an regulator of the ubiquitin (Ubl) conjugation pathway by mediating the deneddylation of the cullin subunit of SCF-type E3 ubiquitin-protein ligase complexes. The polypeptide is COP9 signalosome complex subunit 5 (RRI1) (Candida glabrata (strain ATCC 2001 / BCRC 20586 / JCM 3761 / NBRC 0622 / NRRL Y-65 / CBS 138) (Yeast)).